Here is a 170-residue protein sequence, read N- to C-terminus: Adenine phosphoribosyltransferase (170 aa).

This sequence belongs to the purine/pyrimidine phosphoribosyltransferase family. Homodimer.

The protein localises to the cytoplasm. The catalysed reaction is AMP + diphosphate = 5-phospho-alpha-D-ribose 1-diphosphate + adenine. The protein operates within purine metabolism; AMP biosynthesis via salvage pathway; AMP from adenine: step 1/1. Its function is as follows. Catalyzes a salvage reaction resulting in the formation of AMP, that is energically less costly than de novo synthesis. In Carboxydothermus hydrogenoformans (strain ATCC BAA-161 / DSM 6008 / Z-2901), this protein is Adenine phosphoribosyltransferase.